A 190-amino-acid polypeptide reads, in one-letter code: Lipid A acyltransferase PagP (190 aa).

An N-terminal signal peptide occupies residues 1–29 (MYVAMIIRKYFLIIALLVMPWLAIPSVSA). Catalysis depends on residues histidine 62, aspartate 105, and serine 106.

This sequence belongs to the lipid A palmitoyltransferase family. As to quaternary structure, homodimer.

It is found in the cell outer membrane. The catalysed reaction is a lipid A + a 1,2-diacyl-sn-glycero-3-phosphocholine = a hepta-acyl lipid A + a 2-acyl-sn-glycero-3-phosphocholine. It carries out the reaction a lipid IVA + a 1,2-diacyl-sn-glycero-3-phosphocholine = a lipid IVB + a 2-acyl-sn-glycero-3-phosphocholine. It catalyses the reaction a lipid IIA + a 1,2-diacyl-sn-glycero-3-phosphocholine = a lipid IIB + a 2-acyl-sn-glycero-3-phosphocholine. Functionally, transfers a fatty acid residue from the sn-1 position of a phospholipid to the N-linked hydroxyfatty acid chain on the proximal unit of lipid A or its precursors. This is Lipid A acyltransferase PagP from Salmonella typhi.